A 1324-amino-acid polypeptide reads, in one-letter code: MTIVDKASESSDPSAYQNQPGSSEAVSPGDMDAGSASWGAVSSLNDVSNHTLSLGPVPGAVVYSSSSVPDKSKPSPQKDQALGDGIAPPQKVLFPSEKICLKWQQTHRVGAGLQNLGNTCFANAALQCLTYTPPLANYMLSHEHSKTCHAEGFCMMCTMQAHITQALSNPGDVIKPMFVINEMRRIARHFRFGNQEDAHEFLQYTVDAMQKACLNGSNKLDRHTQATTLVCQIFGGYLRSRVKCLNCKGVSDTFDPYLDITLEIKAAQSVNKALEQFVKPEQLDGENSYKCSKCKKMVPASKRFTIHRSSNVLTLSLKRFANFTGGKIAKDVKYPEYLDIRPYMSQPNGEPIVYVLYAVLVHTGFNCHAGHYFCYIKASNGLWYQMNDSIVSTSDIRSVLSQQAYVLFYIRSHDVKNGGELTHPTHSPGQSSPRPVISQRVVTNKQAAPGFIGPQLPSHMIKNPPHLNGTGPLKDTPSSSMSSPNGNSSVNRASPVNASASVQNWSVNRSSVIPEHPKKQKITISIHNKLPVRQCQSQPNLHSNSLENPTKPVPSSTITNSAVQSTSNASTMSVSSKVTKPIPRSESCSQPVMNGKSKLNSSVLVPYGAESSEDSDEESKGLGKENGIGTIVSSHSPGQDAEDEEATPHELQEPMTLNGANSADSDSDPKENGLAPDGASCQGQPALHSENPFAKANGLPGKLMPAPLLSLPEDKILETFRLSNKLKGSTDEMSAPGAERGPPEDRDAEPQPGSPAAESLEEPDAAAGLSSTKKAPPPRDPGTPATKEGAWEAMAVAPEEPPPSAGEDIVGDTAPPDLCDPGSLTGDASPLSQDAKGMIAEGPRDSALAEAPEGLSPAPPARSEEPCEQPLLVHPSGDHARDAQDPSQSLGAPEAAERPPAPVLDMAPAGHPEGDAEPSPGERVEDAAAPKAPGPSPAKEKIGSLRKVDRGHYRSRRERSSSGEPARESRSKTEGHRHRRRRTCPRERDRQDRHAPEHHPGHGDRLSPGERRSLGRCSHHHSRHRSGVELDWVRHHYTEGERGWGREKFYPDRPRWDRCRYYHDRYALYAARDWKPFHGGREHERAGLHERPHKDHNRGRRGCEPARERERHRPSSPRAGAPHALAPHPDRFSHDRTALVAGDNCNLSDRFHEHENGKSRKRRHDSVENSDSHVEKKARRSEQKDPLEEPKAKKHKKSKKKKKSKDKHRDRDSRHQQDSDLSAACSDADLHRHKKKKKKKKRHSRKSEDFVKDSELHLPRVTSLETVAQFRRAQGGFPLSGGPPLEGVGPFREKTKHLRMESRDDRCRLFEYGQGKRRYLELGR.

Disordered stretches follow at residues Met-1–Trp-38 and Tyr-63–Ala-87. Residues Ser-10–Ala-25 are compositionally biased toward polar residues. Residues Tyr-63 to Gln-80 show a composition bias toward low complexity. Position 75 is a phosphoserine (Ser-75). The USP domain maps to Ala-111 to Ser-412. Catalysis depends on Cys-120, which acts as the Nucleophile. His-371 functions as the Proton acceptor in the catalytic mechanism. 6 disordered regions span residues Ile-452–Ser-494, Gln-536–Pro-707, Leu-722–Ser-1026, Arg-1085–Arg-1131, Asp-1149–Ser-1254, and Gly-1275–Lys-1294. A compositionally biased stretch (low complexity) spans Pro-477 to Ser-489. Ser-483 is modified (phosphoserine). Over residues Gln-536 to Gln-564 the composition is skewed to polar residues. Residues Ser-565–Ser-576 are compositionally biased toward low complexity. Residues Glu-586–Val-603 show a composition bias toward polar residues. Residues Ser-754 and Ser-856 each carry the phosphoserine modification. Basic and acidic residues-rich tracts occupy residues Ala-938–Glu-974, Cys-984–Ser-1013, Arg-1101–Arg-1113, Asp-1149–Lys-1158, and Asp-1165–Lys-1191. Ser-1181 bears the Phosphoserine mark. Basic residues predominate over residues Ala-1192–Asp-1206. Over residues Lys-1207 to Asp-1218 the composition is skewed to basic and acidic residues. Phosphoserine occurs at positions 1219, 1222, and 1226. The segment covering His-1231 to Arg-1245 has biased composition (basic residues). A Phosphoserine modification is found at Ser-1247.

This sequence belongs to the peptidase C19 family. In terms of tissue distribution, broadly expressed.

The catalysed reaction is Thiol-dependent hydrolysis of ester, thioester, amide, peptide and isopeptide bonds formed by the C-terminal Gly of ubiquitin (a 76-residue protein attached to proteins as an intracellular targeting signal).. Its function is as follows. Deubiquitinating enzyme which may play an important role during spermatogenesis. The chain is Ubiquitin carboxyl-terminal hydrolase 42 (USP42) from Homo sapiens (Human).